A 1579-amino-acid polypeptide reads, in one-letter code: MEAKERKETVRFDAIRLSLASPEIIRSWSHGEVKKPETLNYRTLKPEKDGLFDARIFGPIKDYECLCGKYKKRKYEGTICDRCGVEVTRSDVRRERFGHIELASPVVHIWYLKSTPSKIGSLLDLTSRDIERVVYFESYLVIEHPTEEEEEAFEKDPKSLPLMEGGLTKYVKLHVVSEDEFREREYEYSNAEKYEYGMGAEKVKDVLARIDLEILAKRLKKDLHGYAGTFDDLNLSYKMNYPRLYNKAIIEIARKFSEVGLRFGDIEPTEKEIDVIISQGYYIVIDPASSDLKFGQIINPENVDSLPEGVIALTGVEALEKLYKAYREKVKEIPIFEVIKESVRNVILKEGTDARLKKIIRRLRLVEGFIESENKPEWMILEVLPVIPPDLRPLIALDGGRFASSDLNDLYRRVINRNNRLKRLIDLDAPEIIIRNEKRMLQEAVDALIDNGRRGRMVTQNNRPLKSLSDSLRGKEGRFRQNLLGKRVDYSGRSVIVVGPELQMHECGLPKQMALELFKPFIYRRLEEKGYATSIKSAKKLVEEKVPEVYECLEEVVKQHPVLLNRAPTLHRMSVQAFEPKLVEGKAIKLHPLVCPPFNADFDGDQMAVHVPLSVEAQLESYILMLSTQNILSPAHGKPVTMPSQDIILGVHYMTQELPNAKGEGKIFGSPEEAVTAYELGTIDLLAKIKVRINGKIVETTAGRIIFNQILPEGYKFVNEVLDKKKISKLISDIYEKYGNEIAAQTLDKIKEIGFRFATKAAVSISVADLVVPKKKAKILEKAIKEAETVWKQYVDGIITKGERHNKIIDIWSQATNEVAKEMFNEIEKSERVENGKKYPGYFNPVYMMASSGARGSRDQIRQLAGMRGLMAKHSGEFIETPIMSNFREGLSVVEYFISTYGARKGLADTALKTAVAGYLTRRLADVAQDVIITGEDCGTLKGITVSSIIESGEIVVPFKDRIIGRYTAEDVYDPYTGELLISANEEITEEVVDKFEKAGIEKVKIRSVLTCEMPHGVCAKCYGRDLAQRKLVDIGEAVGIIAAQSIGEPGTQLTMRTFHIGGAATAKEVQTQHKATHDGTVKLQNVKFVVDKKGRKLIINREGSIKILDKEGKTIERFPAPYGAVLYVEDGQEVKEGTILAEWEPFSDPIIAEKGGEVELRDVILDVTLKEERDNITGKTIYTITFLRPKDAQLHTPRLVIKGEDGNEYVYDLPVNTILLIPKENLEEVWDKCFACSEAEKTDIHHKYLQVKKGFKVSEGDVVAKIPKEKAKVRDIVGGLPRVEELLEAREPKNKAIITEIDGIVKIYEDAKEITLINPKEGKTETYKVPDTTFVIVKNGSFVKAGQSLVDDGSIVAEFDGMVRLKSEGSRIVVFNKETGQQKDYKVPKGKFIIVKDNSVVKAGDPLTDGTPNPHDILRVMGIEELAAFLVKEAQIVYRLQGVEINDKHFEVIIRQILRKVKIVDPGDSRFLLNEIVDKLDLEEEINKVISEGGRPPKAEPVLVGITKAALTTRSWISAASFQETTRVLADAAVEGKVDPLKGLKENVIIGGIIPAGTGIKEYSEVEVVLKEEEKEEV.

4 residues coordinate Zn(2+): Cys-65, Cys-67, Cys-80, and Cys-83. Mg(2+)-binding residues include Asp-601, Asp-603, and Asp-605. Zn(2+) is bound by residues Cys-938, Cys-1012, Cys-1019, and Cys-1022.

Belongs to the RNA polymerase beta' chain family. The RNAP catalytic core consists of 2 alpha, 1 beta, 1 beta' and 1 omega subunit. When a sigma factor is associated with the core the holoenzyme is formed, which can initiate transcription. Mg(2+) serves as cofactor. Requires Zn(2+) as cofactor.

The catalysed reaction is RNA(n) + a ribonucleoside 5'-triphosphate = RNA(n+1) + diphosphate. In terms of biological role, DNA-dependent RNA polymerase catalyzes the transcription of DNA into RNA using the four ribonucleoside triphosphates as substrates. The polypeptide is DNA-directed RNA polymerase subunit beta' (Sulfurihydrogenibium sp. (strain YO3AOP1)).